The primary structure comprises 198 residues: Tumor necrosis factor receptor superfamily member 22 (198 aa).

The Cytoplasmic portion of the chain corresponds to 1–20 (MFGFFCSLVSSLSRWFLWRR). Residues 21 to 41 (LLLLLLLLLLNLPLQVKFAML) traverse the membrane as a helical; Signal-anchor for type II membrane protein segment. Topologically, residues 42-198 (ELHSFKCPAG…SVVVFRIIRR (157 aa)) are extracellular. TNFR-Cys repeat units follow at residues 47-82 (KCPA…QGQC), 84-124 (KCHP…DRKC), and 125-165 (QCRT…NTVC). Disulfide bonds link cysteine 48–cysteine 59, cysteine 60–cysteine 73, cysteine 63–cysteine 82, cysteine 85–cysteine 100, cysteine 103–cysteine 116, cysteine 106–cysteine 124, cysteine 126–cysteine 141, cysteine 144–cysteine 157, and cysteine 147–cysteine 165. Asparagine 62 carries N-linked (GlcNAc...) asparagine glycosylation. An N-linked (GlcNAc...) asparagine glycan is attached at asparagine 158.

Ubiquitous.

It is found in the cell membrane. Its subcellular location is the secreted. Receptor for the cytotoxic ligand TNFSF10/TRAIL. Lacks a cytoplasmic death domain and hence is not capable of inducing apoptosis. Protects cells against TRAIL mediated apoptosis possibly through ligand competition. Cannot induce the NF-kappa-B pathway. In Mus musculus (Mouse), this protein is Tumor necrosis factor receptor superfamily member 22 (Tnfrsf22).